Here is a 191-residue protein sequence, read N- to C-terminus: Small ribosomal subunit protein uS7 (191 aa).

The interval 56 to 80 (NKSGEQGDGDGESGGKAGGIKKRSL) is disordered.

This sequence belongs to the universal ribosomal protein uS7 family. As to quaternary structure, part of the 30S ribosomal subunit. Contacts proteins S9 and S11.

Its function is as follows. One of the primary rRNA binding proteins, it binds directly to 16S rRNA where it nucleates assembly of the head domain of the 30S subunit. Is located at the subunit interface close to the decoding center, probably blocks exit of the E-site tRNA. The polypeptide is Small ribosomal subunit protein uS7 (Coxiella burnetii (strain CbuK_Q154) (Coxiella burnetii (strain Q154))).